Consider the following 247-residue polypeptide: UPF0309 protein lin2794 (247 aa).

Positions 31 to 214 (VAESIENDGV…EKMVNDNFTP (184 aa)) constitute an SIS domain.

Belongs to the UPF0309 family.

The chain is UPF0309 protein lin2794 from Listeria innocua serovar 6a (strain ATCC BAA-680 / CLIP 11262).